Reading from the N-terminus, the 572-residue chain is Proline--tRNA ligase (572 aa).

It belongs to the class-II aminoacyl-tRNA synthetase family. ProS type 1 subfamily. As to quaternary structure, homodimer.

Its subcellular location is the cytoplasm. The enzyme catalyses tRNA(Pro) + L-proline + ATP = L-prolyl-tRNA(Pro) + AMP + diphosphate. Catalyzes the attachment of proline to tRNA(Pro) in a two-step reaction: proline is first activated by ATP to form Pro-AMP and then transferred to the acceptor end of tRNA(Pro). As ProRS can inadvertently accommodate and process non-cognate amino acids such as alanine and cysteine, to avoid such errors it has two additional distinct editing activities against alanine. One activity is designated as 'pretransfer' editing and involves the tRNA(Pro)-independent hydrolysis of activated Ala-AMP. The other activity is designated 'posttransfer' editing and involves deacylation of mischarged Ala-tRNA(Pro). The misacylated Cys-tRNA(Pro) is not edited by ProRS. This is Proline--tRNA ligase from Serratia proteamaculans (strain 568).